Consider the following 532-residue polypeptide: UDP-glucuronosyltransferase 1A6 (532 aa).

Positions 1 to 26 (MACLLRSFQRISAGVFFLALWGMVVG) are cleaved as a signal peptide. Asn-294 and Asn-346 each carry an N-linked (GlcNAc...) asparagine glycan. Residues 490 to 506 (VIGFLLAVVLTVAFITF) form a helical membrane-spanning segment.

It belongs to the UDP-glycosyltransferase family. As to quaternary structure, isoform 1 interacts with isoform 3/i2 suggesting that oligomerization is involved in negative regulation of transferase activity by isoform 3. Isoform 1 also interacts with respective i2 isoforms of UGT1A1, UGT1A3, UGT1A4, UGT1A7, UGT1A8, UGT1A9 and UGT1A10. Expressed in skin. Isoforms 1 and 3 are expressed in kidney and liver. Isoform 1 but not isoform 2 is expressed in colon, esophagus and small intestine.

It is found in the microsome. It localises to the endoplasmic reticulum membrane. The catalysed reaction is glucuronate acceptor + UDP-alpha-D-glucuronate = acceptor beta-D-glucuronoside + UDP + H(+). It catalyses the reaction (5Z,8Z,11Z,14Z)-eicosatetraenoate + UDP-alpha-D-glucuronate = O-[(5Z),(8Z),(11Z),(14Z)-eicosatetraenoyl]-beta-D-glucuronate + UDP. It carries out the reaction 15-hydroxy-(5Z,8Z,11Z,13E)-eicosatetraenoate + UDP-alpha-D-glucuronate = 15-O-(beta-D-glucuronosyl)-(5Z,8Z,11Z,14Z)-eicosatetraenoate + UDP + H(+). The enzyme catalyses (E)-ferulate + UDP-alpha-D-glucuronate = (E)-4-O-(beta-D-glucuronosyl)-ferulate + UDP + H(+). The catalysed reaction is (E)-ferulate + UDP-alpha-D-glucuronate = (E)-ferulic acid beta-D-glucuronate ester + UDP. UDP-glucuronosyltransferase (UGT) that catalyzes phase II biotransformation reactions in which lipophilic substrates are conjugated with glucuronic acid to facilitate their inactivation and excretion from the body. Essential for the elimination and detoxification of drugs, xenobiotics and endogenous compounds. Involved in the glucuronidation of arachidonic acid (AA) and AA-derived eicosanoids including 15-HETE and 20-HETE. Conjugates small planar phenolic molecules such as 4-nitrophenol, 1-naphthol, and 4-methylumbelliferone. The bulky phenol 4-hydroxybiphenyl, androgens and estrogens are not substrates. 2-hydroxybiphenyl is an excellent substrate. Involved in the glucuronidation of the phytochemical ferulic acid at the phenolic or the carboxylic acid group. In terms of biological role, isoform 3 lacks transferase activity but acts as a negative regulator of isoform 1. This chain is UDP-glucuronosyltransferase 1A6, found in Homo sapiens (Human).